The primary structure comprises 318 residues: Methionyl-tRNA formyltransferase (318 aa).

112-115 (SILP) contacts (6S)-5,6,7,8-tetrahydrofolate.

Belongs to the Fmt family.

The enzyme catalyses L-methionyl-tRNA(fMet) + (6R)-10-formyltetrahydrofolate = N-formyl-L-methionyl-tRNA(fMet) + (6S)-5,6,7,8-tetrahydrofolate + H(+). Attaches a formyl group to the free amino group of methionyl-tRNA(fMet). The formyl group appears to play a dual role in the initiator identity of N-formylmethionyl-tRNA by promoting its recognition by IF2 and preventing the misappropriation of this tRNA by the elongation apparatus. The polypeptide is Methionyl-tRNA formyltransferase (Haemophilus influenzae (strain ATCC 51907 / DSM 11121 / KW20 / Rd)).